Consider the following 960-residue polypeptide: Protein mono-ADP-ribosyltransferase PARP10 (960 aa).

An ADP-ribosyl glutamic acid modification is found at E103. The segment covering 325–341 has biased composition (polar residues); sequence SMGSTSPVDPVESSTEL. A disordered region spans residues 325-346; the sequence is SMGSTSPVDPVESSTELPEQVG. S381 and S388 each carry phosphoserine. A disordered region spans residues 553 to 576; it reads SPHGGEDRVPLEMEKEKPGGPGET. The segment covering 555-570 has biased composition (basic and acidic residues); sequence HGGEDRVPLEMEKEKP. The Ubiquitin-interacting signature appears at 604-621; it reads LEEEATLQLAIHRSLESQ. At S617 the chain carries Phosphoserine. Positions 649–856 are myc binding; it reads DEDTGGEAQL…CAHGFNRSFC (208 aa). The PARP catalytic domain maps to 755 to 960; sequence PNLSEQGLKE…TCKNILPGTP (206 aa). A PIP-box motif is present at residues 780–787; that stretch reads QDVVRAFY. E831 is modified (ADP-ribosyl glutamic acid).

Belongs to the ARTD/PARP family. Interacts with MYC. Interacts with PARP14. Interacts (via-PIP box and ubiquitin-interacting motifs) with PCNA. Post-translationally, stimulated through its phosphorylation by CDK2. Acquires CDK-dependent phosphorylation through late-G1 to S phase, and from prometaphase to cytokinesis in the nucleolar organizing regions. Phosphorylation is suppressed in growth-arrested cells. Auto-mono-ADP-ribosylated on glutamate and lysine residues.

Its subcellular location is the cytoplasm. It is found in the nucleus. It catalyses the reaction L-lysyl-[protein] + NAD(+) = N(6)-(ADP-D-ribosyl)-L-lysyl-[protein] + nicotinamide + H(+). It carries out the reaction L-aspartyl-[protein] + NAD(+) = 4-O-(ADP-D-ribosyl)-L-aspartyl-[protein] + nicotinamide. The enzyme catalyses L-glutamyl-[protein] + NAD(+) = 5-O-(ADP-D-ribosyl)-L-glutamyl-[protein] + nicotinamide. Functionally, ADP-ribosyltransferase that mediates mono-ADP-ribosylation of glutamate and aspartate residues on target proteins. In contrast to PARP1 and PARP2, it is not able to mediate poly-ADP-ribosylation. Catalyzes mono-ADP-ribosylation of GSK3B, leading to negatively regulate GSK3B kinase activity. Involved in translesion DNA synthesis in response to DNA damage via its interaction with PCNA. This chain is Protein mono-ADP-ribosyltransferase PARP10, found in Mus musculus (Mouse).